Reading from the N-terminus, the 363-residue chain is 3-dehydroquinate synthase (363 aa).

Residues 75-80, 109-113, 133-134, lysine 146, lysine 155, and 173-176 each bind NAD(+); these read DAEEGK, GAVTD, TS, and TLQT. The Zn(2+) site is built by glutamate 188, histidine 251, and histidine 267.

This sequence belongs to the sugar phosphate cyclases superfamily. Dehydroquinate synthase family. Requires Co(2+) as cofactor. The cofactor is Zn(2+). NAD(+) serves as cofactor.

The protein localises to the cytoplasm. It catalyses the reaction 7-phospho-2-dehydro-3-deoxy-D-arabino-heptonate = 3-dehydroquinate + phosphate. The protein operates within metabolic intermediate biosynthesis; chorismate biosynthesis; chorismate from D-erythrose 4-phosphate and phosphoenolpyruvate: step 2/7. Functionally, catalyzes the conversion of 3-deoxy-D-arabino-heptulosonate 7-phosphate (DAHP) to dehydroquinate (DHQ). The chain is 3-dehydroquinate synthase from Paenarthrobacter aurescens (strain TC1).